The following is a 109-amino-acid chain: Keratin, type II microfibrillar (109 aa).

The segment at 1-10 is linker 1; that stretch reads QNRQCCESNL. One can recognise an IF rod domain in the interval 1 to 109; it reads QNRQCCESNL…RLYEEEIRVL (109 aa). Residues 11–109 are coil 1B; sequence EPLFSGYIET…RLYEEEIRVL (99 aa).

Belongs to the intermediate filament family.

Functionally, wool microfibrillar keratin. This is Keratin, type II microfibrillar from Ovis aries (Sheep).